Here is a 539-residue protein sequence, read N- to C-terminus: Protein lin-14 (539 aa).

2 disordered regions span residues 162-230 and 262-293; these read PTLP…SNHS and ETAP…PRKP. Polar residues-rich tracts occupy residues 163-183 and 193-214; these read TLPN…GTDD and SVDS…NQNI. The span at 274–284 shows a compositional bias: low complexity; that stretch reads NGTTNGTAKAG. The segment at 296–440 is involved in sequence-specific DNA-binding; it reads DDIVKIVRNQ…CRRVRHAKKT (145 aa).

Post-translationally, cleaved by caspase ced-3 in vitro. In terms of tissue distribution, high levels in hypodermal, intestinal, body wall muscle, nerve ring, and ventral nerve cord cells of embryos and L1 animals.

It localises to the nucleus. In terms of biological role, heterochronic protein which controls the choice of stage specific cell fates. Involved in the temporal progression of vulval fate patterning, possibly by inhibiting lin-12. Acts as a transcription factor involved in the stage-specific repression of various genes, including insulin/insulin-like growth factor gene ins-33 and neuropeptide-encoding gene nlp-45. Binds to the consensus sequence 5'-[CT]GGA[AG]-3' in the regulatory elements of target genes. Plays a role in governing the developmental timing of male tail tip morphogenesis. Plays a role in controlling the timing of seam cell development during the larval stages. Plays a role in promoting survival at high temperatures in larvae. Involved in maintenance of the architecture of the ventral nerve cord, perhaps acting via modulating expression of the immunoglobulin domain gene zig-4. May specify L2 and later cell fates, creating a temporal switch. Functionally, may be involved in specifying L1 cell fates. This is Protein lin-14 from Caenorhabditis elegans.